Here is a 127-residue protein sequence, read N- to C-terminus: Aspartate 1-decarboxylase (127 aa).

Ser25 acts as the Schiff-base intermediate with substrate; via pyruvic acid in catalysis. Ser25 is modified (pyruvic acid (Ser)). A substrate-binding site is contributed by Thr57. The active-site Proton donor is the Tyr58. Residue 73–75 (GAA) participates in substrate binding.

The protein belongs to the PanD family. In terms of assembly, heterooctamer of four alpha and four beta subunits. The cofactor is pyruvate. In terms of processing, is synthesized initially as an inactive proenzyme, which is activated by self-cleavage at a specific serine bond to produce a beta-subunit with a hydroxyl group at its C-terminus and an alpha-subunit with a pyruvoyl group at its N-terminus.

The protein resides in the cytoplasm. The catalysed reaction is L-aspartate + H(+) = beta-alanine + CO2. It functions in the pathway cofactor biosynthesis; (R)-pantothenate biosynthesis; beta-alanine from L-aspartate: step 1/1. Its function is as follows. Catalyzes the pyruvoyl-dependent decarboxylation of aspartate to produce beta-alanine. The protein is Aspartate 1-decarboxylase of Neisseria meningitidis serogroup B (strain ATCC BAA-335 / MC58).